Consider the following 390-residue polypeptide: Transforming growth factor beta-1 proprotein (390 aa).

The first 29 residues, 1 to 29 (MPPSGLRLLPLLLPLLWLLVLTPSRPAAG), serve as a signal peptide directing secretion. The segment at 30-74 (LSTCKTIDMELVKRKRIETIRGQILSKLRLASPPSQGEVPPGPLP) is straightjacket domain. Positions 75 to 271 (EAVLALYNST…ATPLERAQHL (197 aa)) are arm domain. Asn82, Asn136, and Asn176 each carry an N-linked (GlcNAc...) asparagine glycan. The tract at residues 226–252 (DSKDNTLQVDINGFTTGRRGDLATIHG) is bowtie tail. Residues 244–246 (RGD) carry the Cell attachment site motif. 4 disulfide bridges follow: Cys285–Cys294, Cys293–Cys356, Cys322–Cys387, and Cys326–Cys389.

This sequence belongs to the TGF-beta family. In terms of assembly, homodimer; disulfide-linked. Interacts with the serine proteases, HTRA1 and HTRA3: the interaction with either inhibits TGFB1-mediated signaling and the HTRA protease activity is required for this inhibition. May interact with THSD4; this interaction may lead to sequestration by FBN1 microfibril assembly and attenuation of TGFB signaling. Interacts with CD109, DPT and ASPN. Interacts with EFEMP2. Interacts with TSKU; the interaction contributes to regulation of the hair cycle. Interacts with TGFBR3. Homodimer; disulfide-linked. Interacts with transforming growth factor beta-1 (TGF-beta-1) chain; interaction is non-covalent and maintains TGF-beta-1 in a latent state; each latency-associated peptide (LAP) monomer interacts with TGF-beta-1 in the other monomer. Interacts with LTBP1; leading to regulation of TGF-beta-1 activation. Interacts with LRRC32/GARP; leading to regulation of TGF-beta-1 activation on the surface of activated regulatory T-cells (Tregs). Interacts with LRRC33/NRROS; leading to regulation of TGF-beta-1 activation in macrophages and microglia. Interacts (via cell attachment site) with integrins ITGAV and ITGB6 (ITGAV:ITGB6), leading to release of the active TGF-beta-1. Interacts with NREP; the interaction results in a decrease in TGFB1 autoinduction. Interacts with HSP90AB1; inhibits latent TGFB1 activation. As to quaternary structure, homodimer; disulfide-linked. Interacts with TGF-beta receptors (TGFBR1 and TGFBR2), leading to signal transduction. Post-translationally, transforming growth factor beta-1 proprotein: The precursor proprotein is cleaved in the Golgi apparatus by FURIN to form Transforming growth factor beta-1 (TGF-beta-1) and Latency-associated peptide (LAP) chains, which remain non-covalently linked, rendering TGF-beta-1 inactive. In terms of processing, N-glycosylated. Deglycosylation leads to activation of Transforming growth factor beta-1 (TGF-beta-1); mechanisms triggering deglycosylation-driven activation of TGF-beta-1 are however unclear.

It localises to the secreted. The protein localises to the extracellular space. It is found in the extracellular matrix. Functionally, transforming growth factor beta-1 proprotein: Precursor of the Latency-associated peptide (LAP) and Transforming growth factor beta-1 (TGF-beta-1) chains, which constitute the regulatory and active subunit of TGF-beta-1, respectively. Its function is as follows. Required to maintain the Transforming growth factor beta-1 (TGF-beta-1) chain in a latent state during storage in extracellular matrix. Associates non-covalently with TGF-beta-1 and regulates its activation via interaction with 'milieu molecules', such as LTBP1, LRRC32/GARP and LRRC33/NRROS, that control activation of TGF-beta-1. Interaction with LRRC33/NRROS regulates activation of TGF-beta-1 in macrophages and microglia. Interaction with LRRC32/GARP controls activation of TGF-beta-1 on the surface of activated regulatory T-cells (Tregs). Interaction with integrins (ITGAV:ITGB6 or ITGAV:ITGB8) results in distortion of the Latency-associated peptide chain and subsequent release of the active TGF-beta-1. Multifunctional protein that regulates the growth and differentiation of various cell types and is involved in various processes, such as normal development, immune function, microglia function and responses to neurodegeneration. Activation into mature form follows different steps: following cleavage of the proprotein in the Golgi apparatus, Latency-associated peptide (LAP) and Transforming growth factor beta-1 (TGF-beta-1) chains remain non-covalently linked rendering TGF-beta-1 inactive during storage in extracellular matrix. At the same time, LAP chain interacts with 'milieu molecules', such as LTBP1, LRRC32/GARP and LRRC33/NRROS that control activation of TGF-beta-1 and maintain it in a latent state during storage in extracellular milieus. TGF-beta-1 is released from LAP by integrins (ITGAV:ITGB6 or ITGAV:ITGB8): integrin-binding to LAP stabilizes an alternative conformation of the LAP bowtie tail and results in distortion of the LAP chain and subsequent release of the active TGF-beta-1. Once activated following release of LAP, TGF-beta-1 acts by binding to TGF-beta receptors (TGFBR1 and TGFBR2), which transduce signal. While expressed by many cells types, TGF-beta-1 only has a very localized range of action within cell environment thanks to fine regulation of its activation by Latency-associated peptide chain (LAP) and 'milieu molecules'. Plays an important role in bone remodeling: acts as a potent stimulator of osteoblastic bone formation, causing chemotaxis, proliferation and differentiation in committed osteoblasts. Can promote either T-helper 17 cells (Th17) or regulatory T-cells (Treg) lineage differentiation in a concentration-dependent manner. At high concentrations, leads to FOXP3-mediated suppression of RORC and down-regulation of IL-17 expression, favoring Treg cell development. At low concentrations in concert with IL-6 and IL-21, leads to expression of the IL-17 and IL-23 receptors, favoring differentiation to Th17 cells. Stimulates sustained production of collagen through the activation of CREB3L1 by regulated intramembrane proteolysis (RIP). Mediates SMAD2/3 activation by inducing its phosphorylation and subsequent translocation to the nucleus. Positively regulates odontoblastic differentiation in dental papilla cells, via promotion of IPO7-mediated translocation of phosphorylated SMAD2 to the nucleus and subsequent transcription of target genes. Can induce epithelial-to-mesenchymal transition (EMT) and cell migration in various cell types. The protein is Transforming growth factor beta-1 proprotein (TGFB1) of Chlorocebus aethiops (Green monkey).